Reading from the N-terminus, the 309-residue chain is MKKKIVAGAVTLLSVAVLAACGKTSGSDKDIITMKGDTITVSEFYDKVKSNPSAQQVLLNLTIKEVFEKQYGKKVTDKEVEEAYEKSSKAYGDNFARVLAQAGLTEDAYREQIRTNKLVEYAVKKAAEKELTDENYKAAYEAYTPEVTAQIIKVDSEDKAKEVLAAAKAEGADFAQLAKDNSTDGDTKDKGGEIKFDSAATNVPDAVKKAAFGLEANAVSDLVTVRSNQGQASYYIVKLVSKTEKSSKWEDYKDKLKQVILTAKQNNTSFIQSVVAKELKDANIKVKDAAFQNLFSQYTQTNTSSSSSK.

Positions 1-20 are cleaved as a signal peptide; the sequence is MKKKIVAGAVTLLSVAVLAA. Cysteine 21 carries the N-palmitoyl cysteine lipid modification. A lipid anchor (S-diacylglycerol cysteine) is attached at cysteine 21. Residues 144 to 241 enclose the PpiC domain; that stretch reads TPEVTAQIIK…ASYYIVKLVS (98 aa).

This sequence belongs to the PrsA family.

It localises to the cell membrane. It carries out the reaction [protein]-peptidylproline (omega=180) = [protein]-peptidylproline (omega=0). Its function is as follows. Plays a major role in protein secretion by helping the post-translocational extracellular folding of several secreted proteins. In Streptococcus gordonii (strain Challis / ATCC 35105 / BCRC 15272 / CH1 / DL1 / V288), this protein is Foldase protein PrsA.